Reading from the N-terminus, the 670-residue chain is Nitrate import ATP-binding protein NrtC (670 aa).

Residues 5–239 form the ABC transporter domain; the sequence is IEIDHVDRIF…RPRHRLEVVN (235 aa). 42 to 49 is a binding site for ATP; that stretch reads GHSGCGKS. Residues 255–278 are linker; it reads NQQKRAKKVGAVSQFAEAMGGNGL. The nrtA-like stretch occupies residues 279 to 670; sequence EKINLDLGFI…LIDQIDQVNQ (392 aa).

The protein belongs to the ABC transporter superfamily. Nitrate/nitrite/cyanate uptake transporter (NitT) (TC 3.A.1.16) family. The complex is composed of two ATP-binding proteins (NrtC and NrtD), two transmembrane proteins (NrtB) and a solute-binding protein (NrtA).

The protein resides in the cell inner membrane. It carries out the reaction nitrate(out) + ATP + H2O = nitrate(in) + ADP + phosphate + H(+). Its function is as follows. Part of the ABC transporter complex NrtABCD involved in nitrate uptake. The complex is probably also involved in nitrite transport. Probably responsible for energy coupling to the transport system. This is Nitrate import ATP-binding protein NrtC (nrtC) from Synechocystis sp. (strain ATCC 27184 / PCC 6803 / Kazusa).